The primary structure comprises 195 residues: Probable GTP-binding protein EngB (195 aa).

Residues 24 to 195 (ELPEIALAGR…EAWDAILEKL (172 aa)) enclose the EngB-type G domain. GTP contacts are provided by residues 32 to 39 (GRSNVGKS), 59 to 63 (GKTQL), 77 to 80 (DVPG), 144 to 147 (TKAD), and 176 to 178 (FSS). Mg(2+) contacts are provided by S39 and T61.

The protein belongs to the TRAFAC class TrmE-Era-EngA-EngB-Septin-like GTPase superfamily. EngB GTPase family. Requires Mg(2+) as cofactor.

In terms of biological role, necessary for normal cell division and for the maintenance of normal septation. This Streptococcus pneumoniae serotype 4 (strain ATCC BAA-334 / TIGR4) protein is Probable GTP-binding protein EngB.